Reading from the N-terminus, the 805-residue chain is G-type lectin S-receptor-like serine/threonine-protein kinase SD1-29 (805 aa).

A signal peptide spans 1–21; sequence MGMVLFACLLLLIIFPTCGYA. The 120-residue stretch at 22–141 folds into the Bulb-type lectin domain; sequence AINTSSPLSI…VSGNKLWQSF (120 aa). The Extracellular portion of the chain corresponds to 22–428; sequence AINTSSPLSI…SELAGSSRRK (407 aa). N-linked (GlcNAc...) asparagine glycans are attached at residues N24, N50, N85, N91, and N248. Residues 277–313 form the EGF-like domain; that stretch reads PENPCDLYGRCGPYGLCVRSDPPKCECLKGFVPKSDE. Intrachain disulfides connect C281–C293 and C287–C301. N319 and N378 each carry an N-linked (GlcNAc...) asparagine glycan. The 87-residue stretch at 332–418 folds into the PAN domain; sequence CQAKSSMKTQ…GEFLFIRLAS (87 aa). Intrachain disulfides connect C371/C392 and C375/C381. A helical membrane pass occupies residues 429–449; it reads IIVGTTVSLSIFLILVFAAIM. Over 450 to 805 the chain is Cytoplasmic; the sequence is LWRYRAKQND…EMTESMIQGR (356 aa). Residues 488-773 form the Protein kinase domain; that stretch reads FSPSNKLGQG…DLPVPKQPIF (286 aa). ATP-binding positions include 494–502 and K516; that span reads LGQGGFGPV. A phosphoserine mark is found at S522 and S537. A caM-binding region spans residues 577–594; the sequence is CLKFELDWPKRFNIIQGI. Y600 is modified (phosphotyrosine). Catalysis depends on D613, which acts as the Proton acceptor. Residues S617 and S630 each carry the phosphoserine modification. T647 is subject to Phosphothreonine. Residues S690 and S793 each carry the phosphoserine modification.

It belongs to the protein kinase superfamily. Ser/Thr protein kinase family. As to quaternary structure, interacts with PUB9, PUB13, PUB14, PUB29, PUB38, PUB44 and PUB45. Interacts with PBL34, PBL35 and PBL36. Post-translationally, autophosphorylated at Tyr-600. Autophosphorylation at Tyr-600 is required for downstream phosphorylation of the receptor-like cytoplasmic kinase PBL34, PBL35 and PBL36, and activation of plant immunity.

It is found in the cell membrane. The catalysed reaction is L-seryl-[protein] + ATP = O-phospho-L-seryl-[protein] + ADP + H(+). It catalyses the reaction L-threonyl-[protein] + ATP = O-phospho-L-threonyl-[protein] + ADP + H(+). The enzyme catalyses L-tyrosyl-[protein] + ATP = O-phospho-L-tyrosyl-[protein] + ADP + H(+). Its function is as follows. S-domain receptor protein kinase involved in lipopolysaccharide (LPS) sensing. Specifically detects LPS of Pseudomonas and Xanthomonas species. LPS are major components of the outer membrane of Gram-negative bacteria and are important microbe-associated molecular patterns (MAMPs) that trigger biphasic production of reactive oxygen species (ROS) and immune responses in plants. Seems to be only partially associated with the second LPS-triggered ROS burst. Mediates defense signaling in response to the medium-chain 3-hydroxy fatty acid 3-OH-C10:0, a pathogen-associated molecular pattern (PAMP) which induces autophosphorylation at Tyr-600. Autophosphorylation at Tyr-600 is required for downstream phosphorylation of the receptor-like cytoplasmic kinase PBL34, PBL35 and PBL36, and activation of plant immunity. (Microbial infection) Targeted by the bacterial type III effector protein tyrosine phosphatase HopAO1 from Pseudomonas syringae. HopAO1 dephosphorylates Tyr-600, which suppresses the immune response. The chain is G-type lectin S-receptor-like serine/threonine-protein kinase SD1-29 from Arabidopsis thaliana (Mouse-ear cress).